Reading from the N-terminus, the 314-residue chain is Lipoyl synthase (314 aa).

Residues 1–24 (MMDTPIIRHPEKVRRPDNPSPRKP) form a disordered region. [4Fe-4S] cluster is bound by residues Cys-53, Cys-58, Cys-64, Cys-79, Cys-83, Cys-86, and Ser-293. The Radical SAM core domain occupies 65–282 (WKRRHATFMI…ADIARGKGFL (218 aa)). The segment covering 294–308 (HHADRDFEDLRKARQ) has biased composition (basic and acidic residues). Residues 294–314 (HHADRDFEDLRKARQDAAATK) are disordered.

Belongs to the radical SAM superfamily. Lipoyl synthase family. It depends on [4Fe-4S] cluster as a cofactor.

It is found in the cytoplasm. The catalysed reaction is [[Fe-S] cluster scaffold protein carrying a second [4Fe-4S](2+) cluster] + N(6)-octanoyl-L-lysyl-[protein] + 2 oxidized [2Fe-2S]-[ferredoxin] + 2 S-adenosyl-L-methionine + 4 H(+) = [[Fe-S] cluster scaffold protein] + N(6)-[(R)-dihydrolipoyl]-L-lysyl-[protein] + 4 Fe(3+) + 2 hydrogen sulfide + 2 5'-deoxyadenosine + 2 L-methionine + 2 reduced [2Fe-2S]-[ferredoxin]. The protein operates within protein modification; protein lipoylation via endogenous pathway; protein N(6)-(lipoyl)lysine from octanoyl-[acyl-carrier-protein]: step 2/2. Catalyzes the radical-mediated insertion of two sulfur atoms into the C-6 and C-8 positions of the octanoyl moiety bound to the lipoyl domains of lipoate-dependent enzymes, thereby converting the octanoylated domains into lipoylated derivatives. The protein is Lipoyl synthase of Rhodospirillum rubrum (strain ATCC 11170 / ATH 1.1.1 / DSM 467 / LMG 4362 / NCIMB 8255 / S1).